The chain runs to 542 residues: Tripartite motif-containing protein 26 (542 aa).

The RING-type zinc finger occupies 16 to 57; the sequence is CSICLDYLRDPVTIDCGHVFCRSCTSDIRPISGNRPVCPLCK. Residues 97–138 form a B box-type zinc finger; sequence QDMKLCERHQEKLHYYCEDDGKLLCVMCRESREHRPHTAVLV. Residues cysteine 102, histidine 105, cysteine 124, and histidine 130 each contribute to the Zn(2+) site. A coiled-coil region spans residues 197 to 243; sequence QFLKKREQHLLDQLATLEQLLTEGREKFKTRGVSELDRLTLVISELE. Positions 298–542 constitute a B30.2/SPRY domain; sequence RGLRQFQGKL…WPEARLLLRP (245 aa). Residues 379–440 are disordered; it reads REGWSEDEEE…EEEEEVQESC (62 aa). Acidic residues-rich tracts occupy residues 383-405 and 413-437; these read SEDEEEGEEEEEGEEEEEDEEPG and WETDEEDESLGEEEEEEEEEEEEVQ. Residues 411 to 440 are a coiled coil; that stretch reads EDWETDEEDESLGEEEEEEEEEEEEVQESC.

This sequence belongs to the TRIM/RBCC family. Interacts with TBK1; this interaction bridges together TBK1 and NEMO in order to activate TBK1. Interacts with INCA1. In terms of processing, autoubiquitinates upon viral infection. In turn, autoubiquitinated TRIM26 recruits NEMO and bridges TBK1-NEMO interaction.

It localises to the cytoplasm. Its subcellular location is the nucleus. The enzyme catalyses S-ubiquitinyl-[E2 ubiquitin-conjugating enzyme]-L-cysteine + [acceptor protein]-L-lysine = [E2 ubiquitin-conjugating enzyme]-L-cysteine + N(6)-ubiquitinyl-[acceptor protein]-L-lysine.. Its function is as follows. E3 ubiquitin-protein ligase which regulates the IFN-beta production and antiviral response downstream of various DNA-encoded pattern-recognition receptors (PRRs). Also plays a central role in determining the response to different forms of oxidative stress by controlling levels of DNA glycosylases NEIL1, NEIL3 and NTH1 that are involved in repair of damaged DNA. Promotes nuclear IRF3 ubiquitination and proteasomal degradation. Bridges together TBK1 and NEMO during the innate response to viral infection leading to the activation of TBK1. Positively regulates LPS-mediated inflammatory innate immune response by catalyzing the 'Lys-11'-linked polyubiquitination of TAB1 to enhance its activation and subsequent NF-kappa-B and MAPK signaling. In a manner independent of its catalytic activity, inhibits WWP2, a SOX2-directed E3 ubiquitin ligase, and thus protects SOX2 from polyubiquitination and proteasomal degradation. Ubiquitinates the histone acetyltransferase protein complex component PHF20 and thereby triggers its degradation in the nucleus after its recruitment by the histone demethylase KDM6B, serving as a scaffold protein. Upon induction by TGF-beta, ubiquitinates the TFIID component TAF7 for proteasomal degradation. Induces ferroptosis by ubiquitinating SLC7A11, a critical protein for lipid reactive oxygen species (ROS) scavenging. This Rattus norvegicus (Rat) protein is Tripartite motif-containing protein 26 (Trim26).